An 862-amino-acid chain; its full sequence is Solute carrier family 4 member 11 (862 aa).

The Cytoplasmic portion of the chain corresponds to 1–343; that stretch reads MSQNEHCQDS…IIGKSKSVGK (343 aa). The helical transmembrane segment at 344–366 threads the bilayer; sequence YVTTTLFLYFACLLPTIAFGSLN. At 367–379 the chain is on the extracellular side; that stretch reads DENTNGAIDVQKT. Residues 380-393 form a helical membrane-spanning segment; it reads IAGQSIGGLLYALF. Residues 394 to 398 lie on the Cytoplasmic side of the membrane; that stretch reads SGQPL. The chain crosses the membrane as a helical span at residues 399 to 415; that stretch reads VILLTTAPLAIYTQVIR. Topologically, residues 416–428 are extracellular; that stretch reads VICDDYNLDFNAF. Residues 429–452 traverse the membrane as a helical segment; it reads YAWTGLWNSFFLALYAFLNLSLLM. At 453 to 460 the chain is on the cytoplasmic side; it reads NLFKRSTE. The chain crosses the membrane as a helical span at residues 461 to 481; it reads EIIALFISITFVLDAVKGMVK. At 482 to 542 the chain is on the extracellular side; the sequence is IFGKYYYGHH…SSPGSTHSGQ (61 aa). 2 N-linked (GlcNAc...) asparagine glycosylation sites follow: N511 and N519. Residues 543–564 form a helical membrane-spanning segment; the sequence is ATAVLSLLIMLGTLWLGYTLYQ. Topologically, residues 565 to 577 are cytoplasmic; the sequence is FKKSPYLHPCVRE. Residues 578–599 traverse the membrane as a helical segment; that stretch reads TLSDCALPIAVLSFSLIGSYGF. At 600–627 the chain is on the extracellular side; that stretch reads QEIEMSKFRYNPSESLFEVAQIHSLSFK. Residues 628 to 645 form a helical membrane-spanning segment; sequence AIGSAMGLGFLLSLLFFI. The Cytoplasmic portion of the chain corresponds to 646-670; the sequence is EQNLVAALVNAPENRLVKGTAYHWD. Residues 671–691 traverse the membrane as a helical segment; that stretch reads LLLLAIINTGLSLFGLPWIHA. The Extracellular portion of the chain corresponds to 692 to 721; that stretch reads AYPHSPLHVRALALVEERVENGHIYETIVD. The chain crosses the membrane as a helical span at residues 722–746; that stretch reads VKETRLTALGASVLVGLSLLLLPFP. The Cytoplasmic segment spans residues 747–752; the sequence is LQWIPK. Residues 753 to 770 form a helical membrane-spanning segment; sequence PVLYGLFLYIALTSLDGN. The Extracellular segment spans residues 771–774; it reads QLFS. Residues 775–797 traverse the membrane as a helical segment; sequence RVALLLKEQTSYPPTHYIRRVPQ. The Cytoplasmic portion of the chain corresponds to 798-802; it reads RKIHY. A helical membrane pass occupies residues 803–819; it reads FTGLQILQLLLLCAFGM. Topologically, residues 820–823 are extracellular; that stretch reads SSLP. The helical transmembrane segment at 824–844 threads the bilayer; that stretch reads YMKMVFPLIMIAMIPIRYNLL. The Cytoplasmic segment spans residues 845–862; it reads PRIIEAKYLDVMDAEHRP.

It belongs to the anion exchanger (TC 2.A.31) family. In terms of assembly, homodimer. In terms of processing, glycosylated. Expressed in the endothelial cells of the cornea. In the inner ear, is located in fibrocytes underlying the stria vascularis. In the kidney, is expressed in the thin descending limb of Henle loop.

The protein resides in the cell membrane. It localises to the basolateral cell membrane. It catalyses the reaction tetrahydroxoborate(in) + 2 Na(+)(in) = tetrahydroxoborate(out) + 2 Na(+)(out). Functionally, multifunctional transporter with an impact in cell morphology and differentiation. In the presence of borate B(OH)4(-), acts as a voltage-dependent electrogenic Na(+)-coupled B(OH)4(-) cotransporter controlling boron homeostasis. At early stages of stem cell differentiation, participates in synergy with ITGA5-ITGB1 and ITGAV-ITGB3 integrins and BMPR1A to promote cell adhesion and contractility that drives differentiation toward osteogenic commitment while inhibiting adipogenesis. In the absence of B(OH)4(-), acts as a Na(+)-coupled OH(-) or H(+) permeable channel with implications in cellular redox balance. Regulates the oxidative stress response in corneal endothelium by enhancing antioxidant defenses and protecting cells from reactive oxygen species. In response to hypo-osmotic challenge, also acts as water permeable channel at the basolateral cell membrane of corneal endothelial cells and facilitates transendothelial fluid reabsorption in the aqueous humor. In the presence of ammonia, acts as an electrogenic NH3/H(+) cotransporter and may play a role in ammonia transport and reabsorption in renal Henle's loop epithelium. The polypeptide is Solute carrier family 4 member 11 (Slc4a11) (Mus musculus (Mouse)).